The following is a 316-amino-acid chain: Acetyl-coenzyme A carboxylase carboxyl transferase subunit beta (316 aa).

Residues Leu39–Met308 enclose the CoA carboxyltransferase N-terminal domain. The Zn(2+) site is built by Cys43, Cys46, Cys62, and Cys65. A C4-type zinc finger spans residues Cys43 to Cys65.

It belongs to the AccD/PCCB family. As to quaternary structure, acetyl-CoA carboxylase is a heterohexamer composed of biotin carboxyl carrier protein (AccB), biotin carboxylase (AccC) and two subunits each of ACCase subunit alpha (AccA) and ACCase subunit beta (AccD). It depends on Zn(2+) as a cofactor.

It localises to the cytoplasm. The catalysed reaction is N(6)-carboxybiotinyl-L-lysyl-[protein] + acetyl-CoA = N(6)-biotinyl-L-lysyl-[protein] + malonyl-CoA. It functions in the pathway lipid metabolism; malonyl-CoA biosynthesis; malonyl-CoA from acetyl-CoA: step 1/1. Its function is as follows. Component of the acetyl coenzyme A carboxylase (ACC) complex. Biotin carboxylase (BC) catalyzes the carboxylation of biotin on its carrier protein (BCCP) and then the CO(2) group is transferred by the transcarboxylase to acetyl-CoA to form malonyl-CoA. The chain is Acetyl-coenzyme A carboxylase carboxyl transferase subunit beta from Trichormus variabilis (strain ATCC 29413 / PCC 7937) (Anabaena variabilis).